The chain runs to 203 residues: Cardiotrophin-1 (203 aa).

The protein belongs to the IL-6 superfamily. In terms of tissue distribution, highly expressed in heart, skeletal muscle, liver, lung and kidney. Lower levels in testis and brain. No expression in spleen.

Its subcellular location is the secreted. In terms of biological role, induces cardiac myocyte hypertrophy in vitro. Binds to and activates the ILST/gp130 receptor. The protein is Cardiotrophin-1 (Ctf1) of Mus musculus (Mouse).